The primary structure comprises 436 residues: Methylenetetrahydrofolate--tRNA-(uracil-5-)-methyltransferase TrmFO (436 aa).

Gly-9–Gly-14 is an FAD binding site.

The protein belongs to the MnmG family. TrmFO subfamily. FAD is required as a cofactor.

It is found in the cytoplasm. The catalysed reaction is uridine(54) in tRNA + (6R)-5,10-methylene-5,6,7,8-tetrahydrofolate + NADH + H(+) = 5-methyluridine(54) in tRNA + (6S)-5,6,7,8-tetrahydrofolate + NAD(+). It carries out the reaction uridine(54) in tRNA + (6R)-5,10-methylene-5,6,7,8-tetrahydrofolate + NADPH + H(+) = 5-methyluridine(54) in tRNA + (6S)-5,6,7,8-tetrahydrofolate + NADP(+). Catalyzes the folate-dependent formation of 5-methyl-uridine at position 54 (M-5-U54) in all tRNAs. In Acetivibrio thermocellus (strain ATCC 27405 / DSM 1237 / JCM 9322 / NBRC 103400 / NCIMB 10682 / NRRL B-4536 / VPI 7372) (Clostridium thermocellum), this protein is Methylenetetrahydrofolate--tRNA-(uracil-5-)-methyltransferase TrmFO.